The primary structure comprises 598 residues: UvrABC system protein C (598 aa).

A GIY-YIG domain is found at 14 to 91 (DSPGCYLHKD…IQKNMPKYNI (78 aa)). A UVR domain is found at 196–231 (DKIIEDLRSKMLAASEEMAFERAAEYRDLISGIATM).

Belongs to the UvrC family. In terms of assembly, interacts with UvrB in an incision complex.

It localises to the cytoplasm. Its function is as follows. The UvrABC repair system catalyzes the recognition and processing of DNA lesions. UvrC both incises the 5' and 3' sides of the lesion. The N-terminal half is responsible for the 3' incision and the C-terminal half is responsible for the 5' incision. The protein is UvrABC system protein C of Streptococcus pyogenes serotype M28 (strain MGAS6180).